Here is an 89-residue protein sequence, read N- to C-terminus: Large ribosomal subunit protein eL34 (89 aa).

Residues 1–32 form a disordered region; sequence MPAPRFKSGSFKKISKRGPGNKTLTHHRRSKV.

The protein belongs to the eukaryotic ribosomal protein eL34 family.

This chain is Large ribosomal subunit protein eL34, found in Methanococcus aeolicus (strain ATCC BAA-1280 / DSM 17508 / OCM 812 / Nankai-3).